A 777-amino-acid chain; its full sequence is 1,4-alpha-glucan branching enzyme GlgB (777 aa).

The active-site Nucleophile is Asp-408. Catalysis depends on Glu-461, which acts as the Proton donor.

It belongs to the glycosyl hydrolase 13 family. GlgB subfamily. Monomer.

The catalysed reaction is Transfers a segment of a (1-&gt;4)-alpha-D-glucan chain to a primary hydroxy group in a similar glucan chain.. It functions in the pathway glycan biosynthesis; glycogen biosynthesis. Functionally, catalyzes the formation of the alpha-1,6-glucosidic linkages in glycogen by scission of a 1,4-alpha-linked oligosaccharide from growing alpha-1,4-glucan chains and the subsequent attachment of the oligosaccharide to the alpha-1,6 position. The sequence is that of 1,4-alpha-glucan branching enzyme GlgB from Actinobacillus pleuropneumoniae serotype 3 (strain JL03).